Here is a 343-residue protein sequence, read N- to C-terminus: tRNA N6-adenosine threonylcarbamoyltransferase (343 aa).

Histidine 120 and histidine 124 together coordinate Fe cation. Substrate is bound by residues 142–146, aspartate 175, glycine 188, aspartate 192, and asparagine 281; that span reads VVSGG. Residue aspartate 310 coordinates Fe cation.

The protein belongs to the KAE1 / TsaD family. Fe(2+) is required as a cofactor.

It localises to the cytoplasm. The enzyme catalyses L-threonylcarbamoyladenylate + adenosine(37) in tRNA = N(6)-L-threonylcarbamoyladenosine(37) in tRNA + AMP + H(+). In terms of biological role, required for the formation of a threonylcarbamoyl group on adenosine at position 37 (t(6)A37) in tRNAs that read codons beginning with adenine. Is involved in the transfer of the threonylcarbamoyl moiety of threonylcarbamoyl-AMP (TC-AMP) to the N6 group of A37, together with TsaE and TsaB. TsaD likely plays a direct catalytic role in this reaction. The polypeptide is tRNA N6-adenosine threonylcarbamoyltransferase (Bacillus thuringiensis (strain Al Hakam)).